The sequence spans 413 residues: Palmitoyltransferase ZDHHC6 (413 aa).

At 1-24 (MGIFCSVIKFENLQDLRRLCHWGP) the chain is on the cytoplasmic side. The helical transmembrane segment at 25 to 45 (IIALGVIAICSTMAMIDSVLW) threads the bilayer. Residues 46-57 (YWPLHTTGGSVN) are Lumenal-facing. The chain crosses the membrane as a helical span at residues 58–78 (FIMLINWTVMILYNYFNAMFA). Residues 79–143 (GPGFVPRGWK…NCCGHQNHAS (65 aa)) are Cytoplasmic-facing. One can recognise a DHHC domain in the interval 99-149 (QYCKVCQAYKAPRSHHCRKCNRCVMKMDHHCPWINNCCGHQNHASFTLFLL). Cys-129 acts as the S-palmitoyl cysteine intermediate in catalysis. A helical membrane pass occupies residues 144–164 (FTLFLLLAPLGCTHAAFIFVM). The Lumenal segment spans residues 165–194 (TMYTQLYNRLSFGWNTVKIDMSAARRDPPP). The chain crosses the membrane as a helical span at residues 195–215 (IVPFGLAAFAATLFALGLALG). The Cytoplasmic portion of the chain corresponds to 216–413 (TTIAVGMLFF…PAPEGEKKNR (198 aa)). An SH3 domain is found at 313–398 (VRSVRYKVIE…PRNCVEKCPC (86 aa)). 3 S-palmitoyl cysteine lipidation sites follow: Cys-328, Cys-329, and Cys-343. A Di-lysine motif motif is present at residues 410 to 413 (KKNR).

This sequence belongs to the DHHC palmitoyltransferase family. In terms of assembly, homooligomerizes. Interacts with SELENOK. In terms of processing, palmitoylated at 3 different sites by ZDHHC16. The combination of the different palmitoylation events strongly affects the quaternary assembly of ZDHHC6, its localization, stability and function. Palmitoylation at Cys-328 accelerates the turnover of ZDHHC6. Depalmitoylated by LYPLA2.

The protein localises to the endoplasmic reticulum membrane. It catalyses the reaction L-cysteinyl-[protein] + hexadecanoyl-CoA = S-hexadecanoyl-L-cysteinyl-[protein] + CoA. The catalysed reaction is L-cysteinyl-[protein] + octadecanoyl-CoA = S-octadecanoyl-L-cysteinyl-[protein] + CoA. Endoplasmic reticulum palmitoyl acyltransferase that mediates palmitoylation of proteins such as AMFR, CALX, ITPR1 and TFRC. Palmitoylates calnexin (CALX), which is required for its association with the ribosome-translocon complex and efficient folding of glycosylated proteins. Mediates palmitoylation of AMFR, promoting AMFR distribution to the peripheral endoplasmic reticulum. Together with SELENOK, palmitoylates ITPR1 in immune cells, leading to regulate ITPR1 stability and function. Stearoyltransferase that mediates stearoylation of TFRC to inhibit TFRC-mediated activation of the JNK pathway and mitochondrial fragmentation. In Mus musculus (Mouse), this protein is Palmitoyltransferase ZDHHC6.